The following is a 37-amino-acid chain: M-oxotoxin-Ot2b (37 aa).

Expressed by the venom gland.

It localises to the secreted. Its function is as follows. Disrupts biological membranes, particularly those rich in phosphocholine. Has antimicrobial activity against Gram-negative bacterium E.coli, Gram-positive bacteria B.subtilis and S.aureus, and hemolytic activity against sheep, pig and guinea pig red blood cells. Has insecticidal activity against S.frugiperda ovarian cells by opening non-selective ion channels. Enhances the insecticidal activity of spider venom neurotoxic peptides. The sequence is that of M-oxotoxin-Ot2b from Oxyopes takobius (Lynx spider).